The chain runs to 585 residues: 1-deoxy-D-xylulose-5-phosphate synthase (585 aa).

Thiamine diphosphate-binding positions include H80 and 121 to 123 (GHS). D152 contacts Mg(2+). Thiamine diphosphate-binding positions include 153 to 154 (GS), N181, Y259, and E334. Residue N181 participates in Mg(2+) binding.

Belongs to the transketolase family. DXPS subfamily. In terms of assembly, homodimer. Requires Mg(2+) as cofactor. The cofactor is thiamine diphosphate.

It carries out the reaction D-glyceraldehyde 3-phosphate + pyruvate + H(+) = 1-deoxy-D-xylulose 5-phosphate + CO2. The protein operates within metabolic intermediate biosynthesis; 1-deoxy-D-xylulose 5-phosphate biosynthesis; 1-deoxy-D-xylulose 5-phosphate from D-glyceraldehyde 3-phosphate and pyruvate: step 1/1. Functionally, catalyzes the acyloin condensation reaction between C atoms 2 and 3 of pyruvate and glyceraldehyde 3-phosphate to yield 1-deoxy-D-xylulose-5-phosphate (DXP). This chain is 1-deoxy-D-xylulose-5-phosphate synthase, found in Buchnera aphidicola subsp. Schizaphis graminum (strain Sg).